A 205-amino-acid chain; its full sequence is Tic20 family protein Ycf60 (205 aa).

The next 5 helical transmembrane spans lie at 5 to 25 (LFVN…VILI), 54 to 74 (AISC…FGIV), 102 to 122 (LIGF…IIQI), 130 to 150 (IVQA…LTSL), and 163 to 183 (LADT…TDAL).

It belongs to the Tic20 family.

The protein localises to the plastid. It localises to the chloroplast membrane. The polypeptide is Tic20 family protein Ycf60 (ycf60) (Cyanidium caldarium (Red alga)).